The following is a 314-amino-acid chain: L-lactate dehydrogenase 2 (314 aa).

Residues valine 16, aspartate 37, lysine 42, tyrosine 68, and 82-83 (GV) contribute to the NAD(+) site. The substrate site is built by glutamine 85 and arginine 91. NAD(+)-binding positions include serine 104, 121–123 (ASN), and threonine 146. Substrate is bound at residue 123–126 (NPVD). 151 to 154 (DTTR) is a substrate binding site. Residues arginine 156 and histidine 171 each contribute to the beta-D-fructose 1,6-bisphosphate site. Residue histidine 178 is the Proton acceptor of the active site. The residue at position 223 (tyrosine 223) is a Phosphotyrosine. Residue threonine 232 participates in substrate binding.

It belongs to the LDH/MDH superfamily. LDH family. In terms of assembly, homotetramer.

The protein localises to the cytoplasm. The enzyme catalyses (S)-lactate + NAD(+) = pyruvate + NADH + H(+). It participates in fermentation; pyruvate fermentation to lactate; (S)-lactate from pyruvate: step 1/1. With respect to regulation, allosterically activated by fructose 1,6-bisphosphate (FBP). Catalyzes the conversion of lactate to pyruvate. The polypeptide is L-lactate dehydrogenase 2 (Lactococcus lactis subsp. lactis (strain IL1403) (Streptococcus lactis)).